The following is a 106-amino-acid chain: Small ribosomal subunit protein bS18 (106 aa).

The tract at residues 1 to 41 (MAEEHSNQRSQTFNGERTNRPSRKPRGDGERRGRRQGGRRR) is disordered.

Belongs to the bacterial ribosomal protein bS18 family. As to quaternary structure, part of the 30S ribosomal subunit. Forms a tight heterodimer with protein bS6.

In terms of biological role, binds as a heterodimer with protein bS6 to the central domain of the 16S rRNA, where it helps stabilize the platform of the 30S subunit. This is Small ribosomal subunit protein bS18 from Oenococcus oeni (strain ATCC BAA-331 / PSU-1).